The sequence spans 1343 residues: DNA-directed RNA polymerase subunit beta (1343 aa).

Belongs to the RNA polymerase beta chain family. The RNAP catalytic core consists of 2 alpha, 1 beta, 1 beta' and 1 omega subunit. When a sigma factor is associated with the core the holoenzyme is formed, which can initiate transcription.

The enzyme catalyses RNA(n) + a ribonucleoside 5'-triphosphate = RNA(n+1) + diphosphate. DNA-dependent RNA polymerase catalyzes the transcription of DNA into RNA using the four ribonucleoside triphosphates as substrates. The chain is DNA-directed RNA polymerase subunit beta from Shewanella baltica (strain OS223).